An 871-amino-acid chain; its full sequence is MMPPPFMPPPGIPPPFPPMGLPPMSQRPPAIPPMPPGILPPMLPPMGAPPPLTQIPGMVPPMMPGMLMPAVPVTAATAPGADTASSAVAGTGPPRALWSEHVAPDGRIYYYNADDKQSVWEKPSVLKSKAELLLSQCPWKEYKSDTGKPYYYNNQSKESRWTRPKDLDDLEVLVKQEAAGKQQQQLPQTLQPQPPQPQPDPPPVPPGPTPVPTGLLEPEPGGSEDCDVLEATQPLEQGFLQQLEEGPSSSGQHQPQQEEEESKPEPERSGLSWSNREKAKQAFKELLRDKAVPSNASWEQAMKMVVTDPRYSALPKLSEKKQAFNAYKAQREKEEKEEARLRAKEAKQTLQHFLEQHERMTSTTRYRRAEQTFGELEVWAVVPERDRKEVYDDVLFFLAKKEKEQAKQLRRRNIQALKSILDGMSSVNFQTTWSQAQQYLMDNPSFAQDHQLQNMDKEDALICFEEHIRALEREEEEERERARLRERRQQRKNREAFQTFLDELHETGQLHSMSTWMELYPAVSTDVRFANMLGQPGSTPLDLFKFYVEELKARFHDEKKIIKDILKDRGFCVEVNTAFEDFAHVISFDKRAAALDAGNIKLTFNSLLEKAEAREREREKEEARRMRRREAAFRSMLRQAVPALELGTAWEEVRERFVCDSAFEQITLESERIRLFREFLQVLEQTECQHLHTKGRKHGRKGKKHHHKRSHSPSGSESEEEELPPPSLRPPKRRRRNPSESGSEPSSSLDSVESGGAALGGRGSPSSHLLGADHGLRKAKKPKKKTKKRRHKSNSPESETDPEEKAGKESDEKEQEQDKDRELQQAELPNRSPGFGIKKEKTGWDTSESELSEGELERRRRTLLQQLDDHQ.

WW domains follow at residues 92–125 (GPPR…KPSV) and 133–166 (LLSQ…RPKD). Lys-148 carries the post-translational modification N6-acetyllysine. The segment at 171-277 (EVLVKQEAAG…RSGLSWSNRE (107 aa)) is disordered. A Glycyl lysine isopeptide (Lys-Gly) (interchain with G-Cter in SUMO2) cross-link involves residue Lys-175. Positions 182–191 (QQQQLPQTLQ) are enriched in low complexity. Residues 192 to 211 (PQPPQPQPDPPPVPPGPTPV) show a composition bias toward pro residues. Low complexity-rich tracts occupy residues 212–221 (PTGLLEPEPG) and 245–255 (EGPSSSGQHQP). FF domains are found at residues 276–330 (REKA…YKAQ), 340–397 (RLRA…VLFF), 410–470 (RRRN…HIRA), 490–550 (QRKN…YVEE), 554–610 (RFHD…LLEK), and 625–682 (RMRR…FLQV). The segment at 690-871 (HLHTKGRKHG…TLLQQLDDHQ (182 aa)) is disordered. A compositionally biased stretch (basic residues) spans 691 to 711 (LHTKGRKHGRKGKKHHHKRSH). Residues 739–756 (SESGSEPSSSLDSVESGG) are compositionally biased toward low complexity. Residue Ser-764 is modified to Phosphoserine. The span at 777–793 (RKAKKPKKKTKKRRHKS) shows a compositional bias: basic residues. The span at 803–824 (EEKAGKESDEKEQEQDKDRELQ) shows a compositional bias: basic and acidic residues. The residue at position 832 (Ser-832) is a Phosphoserine. Lys-838 participates in a covalent cross-link: Glycyl lysine isopeptide (Lys-Gly) (interchain with G-Cter in SUMO2). Ser-852 is modified (phosphoserine).

The protein belongs to the PRPF40 family. As to quaternary structure, interacts with the N-terminus of HD. In terms of tissue distribution, expressed in the striatum and cortex of the brain (at protein level). Highly expressed in testis, fetal kidney and fetal brain. Moderately expressed in pancreas, skeletal muscle, placenta, brain and heart. Weakly expressed in colon, ileum, ovary, prostate, spleen, kidney and fetal lung.

The protein localises to the nucleus speckle. Functionally, may be involved in pre-mRNA splicing. This is Pre-mRNA-processing factor 40 homolog B (PRPF40B) from Homo sapiens (Human).